The sequence spans 314 residues: Polyadenylate-binding protein-interacting protein 8 (314 aa).

The segment at 1 to 47 is disordered; that stretch reads MAAITEMATDSNDVINDGGTGDGIEKSTDSKPEIESDDLKPKSKPEY. Residues 23-47 are compositionally biased toward basic and acidic residues; it reads GIEKSTDSKPEIESDDLKPKSKPEY. The PAM2-like signature appears at 59 to 69; the sequence is KLNPEAKEFFP. Positions 99-112 match the Bipartite nuclear localization signal motif; it reads RRRRNNYNQGRRVR. 2 consecutive RRM domains span residues 128–203 and 225–301; these read RTVY…PSKT and RTIY…PSKT.

As to quaternary structure, interacts with MPC. In terms of tissue distribution, expressed in cauline leaves, stems, rosette leaves, immature siliques and primary inflorescences but at a low level.

It localises to the nucleus. The polypeptide is Polyadenylate-binding protein-interacting protein 8 (CID8) (Arabidopsis thaliana (Mouse-ear cress)).